The sequence spans 125 residues: Large ribosomal subunit protein bL12 (125 aa).

The protein belongs to the bacterial ribosomal protein bL12 family. In terms of assembly, homodimer. Part of the ribosomal stalk of the 50S ribosomal subunit. Forms a multimeric L10(L12)X complex, where L10 forms an elongated spine to which 2 to 4 L12 dimers bind in a sequential fashion. Binds GTP-bound translation factors.

Forms part of the ribosomal stalk which helps the ribosome interact with GTP-bound translation factors. Is thus essential for accurate translation. This Campylobacter curvus (strain 525.92) protein is Large ribosomal subunit protein bL12.